We begin with the raw amino-acid sequence, 452 residues long: uncharacterized protein (452 aa).

This is an uncharacterized protein from Acanthamoeba polyphaga (Amoeba).